A 202-amino-acid chain; its full sequence is Crustacean calcium-binding protein 23 (202 aa).

At serine 1 the chain carries N-acetylserine. EF-hand domains lie at 33–68 (SGLL…FGLD), 69–104 (LSDG…EMTE), 105–140 (PRKK…KTHP), and 148–185 (TEDE…LSKA). Ca(2+) contacts are provided by aspartate 84, glutamate 93, aspartate 118, aspartate 122, and aspartate 129.

Monomer or disulfide-linked dimers. As to expression, striated muscle and brain.

In terms of biological role, possibly acts as a regulatory protein and not as a calcium buffer or transport protein. The polypeptide is Crustacean calcium-binding protein 23 (Faxonius limosus (Spinycheek crayfish)).